Consider the following 219-residue polypeptide: MTERRLSPLDKLLARADNALRTLTPGTTQAERTPAHAAPAPDAPEAGTLPSDQRRHVLGLMRINHTGEVCAQALYQGQASTASLPHIRHAMEESAREEEDHLAWCEERIQELGGVPSKLNPLFYAMSYAVGATAGLIGDRWSLGFVTETENQVVKHLESHLYQVPESDLRTRAILEQMKTDELKHAVTAKDAGGADLPSPVRHAMTLMSKVMTFTTYRI.

The interval 21 to 51 (RTLTPGTTQAERTPAHAAPAPDAPEAGTLPS) is disordered. Over residues 35–46 (AHAAPAPDAPEA) the composition is skewed to low complexity. Residues Glu68, Glu98, His101, Glu150, Glu182, and His185 each coordinate Fe cation.

Belongs to the COQ7 family. Fe cation is required as a cofactor.

The protein localises to the cell membrane. It carries out the reaction a 5-methoxy-2-methyl-3-(all-trans-polyprenyl)benzene-1,4-diol + AH2 + O2 = a 3-demethylubiquinol + A + H2O. It participates in cofactor biosynthesis; ubiquinone biosynthesis. In terms of biological role, catalyzes the hydroxylation of 2-nonaprenyl-3-methyl-6-methoxy-1,4-benzoquinol during ubiquinone biosynthesis. In Alcanivorax borkumensis (strain ATCC 700651 / DSM 11573 / NCIMB 13689 / SK2), this protein is 3-demethoxyubiquinol 3-hydroxylase.